Reading from the N-terminus, the 185-residue chain is ATP-dependent protease subunit HslV (185 aa).

Thr12 is a catalytic residue. Ser168, Cys171, and Thr174 together coordinate Na(+).

Belongs to the peptidase T1B family. HslV subfamily. In terms of assembly, a double ring-shaped homohexamer of HslV is capped on each side by a ring-shaped HslU homohexamer. The assembly of the HslU/HslV complex is dependent on binding of ATP.

The protein resides in the cytoplasm. It carries out the reaction ATP-dependent cleavage of peptide bonds with broad specificity.. With respect to regulation, allosterically activated by HslU binding. Its function is as follows. Protease subunit of a proteasome-like degradation complex believed to be a general protein degrading machinery. The chain is ATP-dependent protease subunit HslV from Jannaschia sp. (strain CCS1).